A 500-amino-acid polypeptide reads, in one-letter code: Prostacyclin synthase (500 aa).

A helical membrane pass occupies residues 1–20 (MAWAALLGLLAALLLLLLLS). Substrate is bound by residues R106, L112, N287, 358-359 (TR), and R382. Residue C441 participates in heme binding.

The protein belongs to the cytochrome P450 family. Heme is required as a cofactor. In terms of tissue distribution, widely expressed; particularly abundant in ovary, heart, skeletal muscle, lung and prostate.

It is found in the endoplasmic reticulum membrane. It catalyses the reaction prostaglandin H2 = prostaglandin I2. It carries out the reaction a hydroperoxyeicosatetraenoate = an oxoeicosatetraenoate + H2O. The enzyme catalyses (15S)-hydroperoxy-(5Z,8Z,11Z,13E)-eicosatetraenoate = 15-oxo-(5Z,8Z,11Z,13E)-eicosatetraenoate + H2O. The catalysed reaction is (15S)-hydroperoxy-(5Z,8Z,11Z,13E)-eicosatetraenoate + AH2 = (15S)-hydroxy-(5Z,8Z,11Z,13E)-eicosatetraenoate + A + H2O. Catalyzes the biosynthesis and metabolism of eicosanoids. Catalyzes the isomerization of prostaglandin H2 to prostacyclin (= prostaglandin I2), a potent mediator of vasodilation and inhibitor of platelet aggregation. Additionally, displays dehydratase activity, toward hydroperoxyeicosatetraenoates (HPETEs), especially toward (15S)-hydroperoxy-(5Z,8Z,11Z,13E)-eicosatetraenoate (15(S)-HPETE). The sequence is that of Prostacyclin synthase (PTGIS) from Homo sapiens (Human).